We begin with the raw amino-acid sequence, 217 residues long: Protein DJ-1alpha (217 aa).

Cysteine 133 functions as the Nucleophile in the catalytic mechanism. Residue cysteine 133 is modified to Cysteine sulfinic acid (-SO2H); alternate.

As to expression, expressed in testis (at protein level).

It is found in the cytoplasm. Its subcellular location is the nucleus. The protein localises to the mitochondrion. Functionally, plays an important role in cell protection against oxidative stress and cell death acting as oxidative stress sensor. Does not play a role in methylglyoxal detoxification. This chain is Protein DJ-1alpha, found in Drosophila melanogaster (Fruit fly).